The chain runs to 575 residues: MSLLAYTNLLLQNGRIFRYYKKANIKKFIKKIIKLDLKSTPSEASVSRQTFLSTGLNSVKNAVQLQARKLLINNVLERVTPTLNSDLKKKAAKRLFYGDSAPFFALVGVSLASGSGLLTKDDELEGICWEIREAVSKGKWNDSESENVEQLQAANLDELDLGEPIAKGCNAVVYSAKLKNVQSNKLAHQLAVKMMFNYDVESNSTAILKAMYRETVPAMSYFFNQNLFNIENISDFKIRLPPHPNIVRMYSVFADRIPDLQCNKQLYPEALPPRINPEGSGRNMSLFLVMKRYDCTLKEYLRDKTPNMRSSILLLSQLLEAVAHMNIHNISHRDLKSDNILVDLSEGDAYPTIVITDFGCCLCDKQNGLVIPYRSEDQDKGGNRALMAPEIANAKPGTFSWLNYKKSDLWAVGAIAYEIFNIDNPFYDKTMKLLSKSYKEEDLPELPDTIPFIIRNLVSNMLSRSTNKRLDCDVAATVAQLYLWAPSSWLKENYTLPNSNEIIQWLLCLSSKVLCERDITARNKTNTMSESVSKAQYKGRRSLPEYELIASFLRRVRLHLVRKGLKWIQELHIYN.

The transit peptide at Met-1–Phe-51 directs the protein to the mitochondrion. The Mitochondrial intermembrane segment spans residues Leu-52–Arg-94. Residues Leu-95–Leu-118 form a helical membrane-spanning segment. At Thr-119–Asn-575 the chain is on the cytoplasmic side. Lys-193 is a binding site for ATP. A phosphoserine; by autocatalysis mark is found at Ser-202 and Ser-204. Residue Glu-214 coordinates Mg(2+). A Phosphothreonine; by autocatalysis modification is found at Thr-305. Residue Asp-334 is the Proton acceptor of the active site. The Mg(2+) site is built by Asn-339 and Asp-357.

It belongs to the protein kinase superfamily. Ser/Thr protein kinase family. Mg(2+) serves as cofactor. In terms of processing, proteolytically cleaved. In healthy cells, the precursor is continuously imported into mitochondria where it is proteolytically cleaved into its short form by the mitochondrial rhomboid protease rho-7 (8231301). The short form is then released into the cytosol where it rapidly undergoes proteasome-dependent degradation. In unhealthy cells, when cellular stress conditions lead to the loss of mitochondrial membrane potential, mitochondrial import is impaired leading to the precursor accumulating on the outer mitochondrial membrane (OMM). Post-translationally, autophosphorylated. Autophosphorylated on Ser-202, which activates kinase activity. Loss of mitochondrial membrane potential results in the precursor accumulating on the outer mitochondrial membrane (OMM) where it is activated by autophosphorylation at Ser-202. Autophosphorylation is sufficient and essential for selective recruitment of park to depolarized mitochondria, likely via Pink1-dependent phosphorylation of polyubiquitin chains. Also autophosphorylated at Ser-204 and Thr-305.

The protein localises to the mitochondrion outer membrane. It is found in the mitochondrion inner membrane. It localises to the cytoplasm. Its subcellular location is the cytosol. It catalyses the reaction L-seryl-[protein] + ATP = O-phospho-L-seryl-[protein] + ADP + H(+). The enzyme catalyses L-threonyl-[protein] + ATP = O-phospho-L-threonyl-[protein] + ADP + H(+). Acts as a serine/threonine-protein kinase. Exhibits a substrate preference for proline at position P+1 and a general preference at several residues for basic residues such as arginine. Also exhibits moderate preferences for a phosphotyrosine at position P-3 and a tryptophan at P-5. Critical to mitochondrial homeostasis it mediates several pathways that maintain mitochondrial health and function Protects against mitochondrial dysfunction during cellular stress by phosphorylating mitochondrial proteins such as park and likely Drp1, to coordinate mitochondrial quality control mechanisms that remove and replace dysfunctional mitochondrial components. Depending on the severity of mitochondrial damage and/or dysfunction, activity ranges from preventing apoptosis and stimulating mitochondrial biogenesis to regulating mitochondrial dynamics and eliminating severely damaged mitochondria via mitophagy. Appears to be particularly important in maintaining the physiology and function of cells with high energy demands that are undergoing stress or altered metabolic environment, including spermatids, muscle cells and neurons such as the dopaminergic (DA) neurons. Mediates the translocation and activation of park at the outer membrane (OMM) of dysfunctional/depolarized mitochondria. At the OMM of damaged mitochondria, phosphorylates pre-existing polyubiquitin chains, the Pink1-phosphorylated polyubiquitin then recruits park from the cytosol to the OMM where park is fully activated by phosphorylation at 'Ser-94' by Pink1. When cellular stress results in irreversible mitochondrial damage, functions with park to promote the clearance of dysfunctional and/or depolarized mitochondria by selective autophagy (mitophagy). The Pink1-park pathway also promotes fission and/or inhibits fusion of damaged mitochondria, by phosphorylating and thus promoting the park-dependent degradation of proteins involved in mitochondrial fusion/fission such as Marf, Opa1 and fzo. This prevents the refusion of unhealthy mitochondria with the mitochondrial network or initiates mitochondrial fragmentation facilitating their later engulfment by autophagosomes. Also likely to promote mitochondrial fission independently of park and Atg7-mediated mitophagy, via the phosphorylation and activation of Drp1. Regulates motility of damaged mitochondria by phosphorylating Miro which likely promotes its park-dependent degradation by the proteasome; in motor neurons, this inhibits mitochondrial intracellular anterograde transport along the axons which probably increases the chance of the mitochondria being eliminated in the soma. The Pink1-park pathway is also involved in mitochondrial regeneration processes such as promoting mitochondrial biogenesis, activating localized mitochondrial repair, promoting selective turnover of mitochondrial proteins and initiating the mitochondrial import of endogenous proteins. Involved in mitochondrial biogenesis by promoting the park-dependent ubiquitination of transcriptional repressor Paris which leads to its subsequent proteasomal degradation and allows activation of the transcription factor srl. Functions with park to promote localized mitochondrial repair by activating the translation of specific nuclear-encoded mitochondrial RNAs (nc-mtRNAs) on the mitochondrial surface, including several key electron transport chain component nc-mtRNAs. During oogenesis, phosphorylates and inactivates larp on the membrane of defective mitochondria, thus impairing local translation and mtDNA replication and consequently, reducing transmission of deleterious mtDNA mutations to the mature oocyte. Phosphorylates the mitochondrial acyl-CoA dehydrogenase Mcad, and appears to be important for maintaining fatty acid and amino acid metabolism via a mechanism that is independent of it's role in maintaining production of ATP. The sequence is that of Serine/threonine-protein kinase Pink1, mitochondrial from Pediculus humanus subsp. corporis (Body louse).